We begin with the raw amino-acid sequence, 225 residues long: Membrane protein (225 aa).

Residues 1-20 (MDNTTNCTLGTEQAVQLFKE) are Virion surface-facing. Residues 21 to 41 (YNLFVTAFLLFLTILLQYGYA) traverse the membrane as a helical segment. Residues 42–51 (TRNKVIYILK) lie on the Intravirion side of the membrane. Residues 52-72 (MIVLWCFWPLNIAVGAISCIY) traverse the membrane as a helical segment. The Virion surface portion of the chain corresponds to 73 to 77 (PPNTG). A helical transmembrane segment spans residues 78–98 (GLVAAIILTVFACLSFIGYWI). Over 99-225 (QSFRLFKRCR…VATGGSSLYT (127 aa)) the chain is Intravirion.

The protein belongs to the gammacoronaviruses M protein family. In terms of assembly, homomultimer. Interacts with envelope E protein in the budding compartment of the host cell, which is located between endoplasmic reticulum and the Golgi complex. Forms a complex with HE and S proteins. Interacts with nucleocapsid N protein. This interaction probably participates in RNA packaging into the virus.

Its subcellular location is the virion membrane. The protein localises to the host Golgi apparatus membrane. Component of the viral envelope that plays a central role in virus morphogenesis and assembly via its interactions with other viral proteins. This is Membrane protein from Avian infectious bronchitis virus (strain 6/82) (IBV).